The following is a 394-amino-acid chain: Myb-like protein R (394 aa).

The next 2 helical transmembrane spans lie at 11-31 (IGAQ…EFII) and 99-119 (FFIG…LIIF). In terms of domain architecture, Myb-like spans 325-377 (GNWSLDEQKALMVEVSTLGNKSEINWFFISKQLFLKGISRNARECQRKHESIQ).

The protein resides in the membrane. This chain is Myb-like protein R (mybR), found in Dictyostelium discoideum (Social amoeba).